The chain runs to 823 residues: Nuclear pore complex protein Nup93-1 (823 aa).

The protein belongs to the nucleoporin interacting component (NIC) family. Part of the nuclear pore complex (NPC). Interacts with msk (via C-terminus); this association might be facilitated by Nup75. Interacts with Mad (preferentially when phosphorylated). Interacts with Nup154 (via N-terminus). Interacts with the Polycomb group (PcG) proteins Pc and E(z).

The protein resides in the nucleus membrane. The protein localises to the nucleus. It is found in the nuclear pore complex. It localises to the nucleoplasm. Functionally, required for nuclear pore complex assembly, maintenance and function. Required for nuclear import of phosphorylated Mad via importin msk. Has no role in classical nuclear localization signal (cNLS)-dependent nuclear import via importin-beta. Mediates the association between the nuclear pore complex and a subclass of silenced regions bound by Polycomb group (PcG) proteins, enables long-range interactions between Polycomb loci and contributes to repression of polycomb targets. Together with Nup62 and Nup154, contributes to karyosome morphology and chromatin organization including attachment to the nuclear envelope in oocytes and nurse cells. In Drosophila melanogaster (Fruit fly), this protein is Nuclear pore complex protein Nup93-1.